The sequence spans 2465 residues: Protein DOP1A (2465 aa).

Disordered stretches follow at residues 559-600, 625-646, and 705-733; these read PSGQ…SSES, GAAA…TVGS, and TEHQ…KEKN. Residues 633–646 are compositionally biased toward low complexity; that stretch reads STSSETETASTVGS. Residues 707–733 are compositionally biased toward basic and acidic residues; the sequence is HQGDLGREQGETSKWDRNSQGDVKEKN. A Phosphoserine modification is found at Ser-1266. Basic and acidic residues-rich tracts occupy residues 1282–1291 and 1305–1315; these read EKETIVKESG and KKDDDKKKSSN. The disordered stretch occupies residues 1282 to 1315; the sequence is EKETIVKESGKQPGAKPKVKLARKKDDDKKKSSN.

Belongs to the DOP1 family.

It is found in the golgi apparatus membrane. Functionally, may be involved in protein traffic between late Golgi and early endosomes. The protein is Protein DOP1A of Homo sapiens (Human).